Here is an 822-residue protein sequence, read N- to C-terminus: Epidermal growth factor receptor kinase substrate 8 (822 aa).

Polar residues-rich tracts occupy residues 1–10 (MNGHISNHPS) and 17–30 (SQMN…TFSQ). The disordered stretch occupies residues 1–39 (MNGHISNHPSSFGMYPSQMNGYGSSPTFSQTDREHGSKT). A Phosphoserine modification is found at Ser58. In terms of domain architecture, PTB spans 64-194 (QYRVEHLTTF…SDSKGGKQKR (131 aa)). 2 disordered regions span residues 202 to 225 (ISNA…GTVT) and 298 to 320 (SKRK…TLRA). The span at 208–221 (SIPPPPRAPAPAPP) shows a compositional bias: pro residues. Position 223 is a phosphothreonine (Thr223). Over residues 299–309 (KRKKNKKGKRK) the composition is skewed to basic residues. Thr317 carries the phosphothreonine modification. At Ser476 the chain carries Phosphoserine. The 60-residue stretch at 531 to 590 (QPKKYAKSKYDFVARNNSELSVLKDDILEILDDRKQWWKVRNASGDSGFVPNNILDIVRP) folds into the SH3 domain. Residues 612 to 689 (EYGPRPADTP…VDRRKSQMEE (78 aa)) are disordered. Pro residues predominate over residues 618 to 645 (ADTPPAPSPPPTPAPVPVPLPPSTPAPV). Position 625 is a phosphoserine (Ser625). Residue Thr629 is modified to Phosphothreonine; by MAPK. The effector region stretch occupies residues 649-822 (KVPANITRQN…VESFDEGSSH (174 aa)). Residues Ser659, Ser662, and Ser685 each carry the phosphoserine modification. A compositionally biased stretch (basic and acidic residues) spans 671–687 (DSQRHKQLPVDRRKSQM). An amphipathic helix region spans residues 680–698 (VDRRKSQMEEVQDELIHRL). Helix bundle regions lie at residues 718-738 (VINI…QSKG), 752-757 (GAQLFS), 762-767 (ELRTVC), and 766-785 (VCPE…AALE). A disordered region spans residues 787 to 822 (SSGSSELQEIMRRRQEKISAAASDSGVESFDEGSSH). Phosphoserine is present on residues Ser811 and Ser815.

The protein belongs to the EPS8 family. Homodimer. Part of a complex consisting of ABI1, EPS8 and SOS1. Interacts with MYO15A and WHRN. Interacts with LANCL1. Interacts with EGFR; mediates EPS8 phosphorylation. Interacts with BAIAP2. Interacts with SHB. In terms of processing, ubiquitinated by the SCF(FBXW5) E3 ubiquitin-protein ligase complex during G2 phase, leading to its transient degradation and subsequent cell shape changes required to allow mitotic progression. Reappears at the midzone of dividing cells. Post-translationally, phosphorylation at Ser-625 and Thr-629 by MAPK following BDNF treatment promotes removal from actin and filopodia formation. Phosphorylated by several receptor tyrosine kinases. In terms of tissue distribution, expressed in all tissues analyzed, including heart, brain, placenta, lung, liver, skeletal muscle, kidney and pancreas. Expressed in all epithelial and fibroblastic lines examined and in some, but not all, hematopoietic cells.

The protein localises to the cytoplasm. The protein resides in the cell cortex. Its subcellular location is the cell projection. It is found in the ruffle membrane. It localises to the growth cone. The protein localises to the stereocilium. The protein resides in the synapse. Its subcellular location is the synaptosome. Functionally, signaling adapter that controls various cellular protrusions by regulating actin cytoskeleton dynamics and architecture. Depending on its association with other signal transducers, can regulate different processes. Together with SOS1 and ABI1, forms a trimeric complex that participates in transduction of signals from Ras to Rac by activating the Rac-specific guanine nucleotide exchange factor (GEF) activity. Acts as a direct regulator of actin dynamics by binding actin filaments and has both barbed-end actin filament capping and actin bundling activities depending on the context. Displays barbed-end actin capping activity when associated with ABI1, thereby regulating actin-based motility process: capping activity is auto-inhibited and inhibition is relieved upon ABI1 interaction. Also shows actin bundling activity when associated with BAIAP2, enhancing BAIAP2-dependent membrane extensions and promoting filopodial protrusions. Involved in the regulation of processes such as axonal filopodia growth, stereocilia length, dendritic cell migration and cancer cell migration and invasion. Acts as a regulator of axonal filopodia formation in neurons: in the absence of neurotrophic factors, negatively regulates axonal filopodia formation via actin-capping activity. In contrast, it is phosphorylated in the presence of BDNF leading to inhibition of its actin-capping activity and stimulation of filopodia formation. Component of a complex with WHRN and MYO15A that localizes at stereocilia tips and is required for elongation of the stereocilia actin core. Indirectly involved in cell cycle progression; its degradation following ubiquitination being required during G2 phase to promote cell shape changes. This is Epidermal growth factor receptor kinase substrate 8 (EPS8) from Homo sapiens (Human).